The sequence spans 64 residues: U2-aranetoxin-Av1a (64 aa).

As to expression, expressed in fat body, but not in cephalothorax, silk gland, midgut.

Functionally, insecticidal toxin. The polypeptide is U2-aranetoxin-Av1a (Araneus ventricosus (Orbweaver spider)).